The chain runs to 120 residues: UPF0102 protein CBU_1742 (120 aa).

It belongs to the UPF0102 family.

This is UPF0102 protein CBU_1742 from Coxiella burnetii (strain RSA 493 / Nine Mile phase I).